We begin with the raw amino-acid sequence, 207 residues long: Proteasome subunit beta 2 (207 aa).

The propeptide at 1–13 is removed in mature form; by autocatalysis; the sequence is METNNKLKILKTG. Thr14 acts as the Nucleophile in catalysis.

It belongs to the peptidase T1B family. As to quaternary structure, the 20S proteasome core is composed of 14 alpha and 14 beta subunits that assemble into four stacked heptameric rings, resulting in a barrel-shaped structure. The two inner rings, each composed of seven catalytic beta subunits, are sandwiched by two outer rings, each composed of seven alpha subunits. The catalytic chamber with the active sites is on the inside of the barrel. Has a gated structure, the ends of the cylinder being occluded by the N-termini of the alpha-subunits. Is capped at one or both ends by the proteasome regulatory ATPase, PAN.

It localises to the cytoplasm. It catalyses the reaction Cleavage of peptide bonds with very broad specificity.. The formation of the proteasomal ATPase PAN-20S proteasome complex, via the docking of the C-termini of PAN into the intersubunit pockets in the alpha-rings, triggers opening of the gate for substrate entry. Interconversion between the open-gate and close-gate conformations leads to a dynamic regulation of the 20S proteasome proteolysis activity. Its function is as follows. Component of the proteasome core, a large protease complex with broad specificity involved in protein degradation. This is Proteasome subunit beta 2 from Sulfurisphaera tokodaii (strain DSM 16993 / JCM 10545 / NBRC 100140 / 7) (Sulfolobus tokodaii).